The following is a 243-amino-acid chain: MEFEDDAFVLAARAHGETGAIVELLTSAHGRYAAHVAGGASRKVRPFLQPGARVIARYRARVSDQLGSAAIEPVGEGPAALFDDPLALSGLSAAAAVAAGALPEREPHPGAFLAFEALTGALTHPDVWPAVFVRFEAGLLQDLGFGLDLSKCAATGITDDLVWVSPRTGRAVSRQAGEPYKDRLLALPPFLLSAQGGLRAGDVAAGLALTGHFLEAFIFGPLNRPLPPARLWLLDRLSEAGRL.

The protein belongs to the RecO family.

Involved in DNA repair and RecF pathway recombination. The chain is DNA repair protein RecO from Phenylobacterium zucineum (strain HLK1).